We begin with the raw amino-acid sequence, 433 residues long: ATP-dependent protease ATPase subunit HslU (433 aa).

Residues Val18, 60-65 (GVGKTE), Asp246, Glu311, and Arg383 each bind ATP.

The protein belongs to the ClpX chaperone family. HslU subfamily. A double ring-shaped homohexamer of HslV is capped on each side by a ring-shaped HslU homohexamer. The assembly of the HslU/HslV complex is dependent on binding of ATP.

It localises to the cytoplasm. In terms of biological role, ATPase subunit of a proteasome-like degradation complex; this subunit has chaperone activity. The binding of ATP and its subsequent hydrolysis by HslU are essential for unfolding of protein substrates subsequently hydrolyzed by HslV. HslU recognizes the N-terminal part of its protein substrates and unfolds these before they are guided to HslV for hydrolysis. This Nitrobacter winogradskyi (strain ATCC 25391 / DSM 10237 / CIP 104748 / NCIMB 11846 / Nb-255) protein is ATP-dependent protease ATPase subunit HslU.